The following is a 56-amino-acid chain: Large ribosomal subunit protein bL32 (56 aa).

Basic residues predominate over residues 1 to 16; the sequence is MAVQKNRKTRSKRGMR. The disordered stretch occupies residues 1-37; that stretch reads MAVQKNRKTRSKRGMRRSHDALGTATMSVDSTSGETH. Residues 25–35 show a composition bias toward polar residues; it reads ATMSVDSTSGE.

This sequence belongs to the bacterial ribosomal protein bL32 family.

This chain is Large ribosomal subunit protein bL32, found in Pseudoalteromonas atlantica (strain T6c / ATCC BAA-1087).